Here is a 575-residue protein sequence, read N- to C-terminus: Dual specificity protein phosphatase YVH1 (575 aa).

The interval 185–213 (KHNNNNNNNNNNNNNNNNNNNNNNCCTFK) is disordered. The span at 187–208 (NNNNNNNNNNNNNNNNNNNNNN) shows a compositional bias: low complexity. One can recognise a Tyrosine-protein phosphatase domain in the interval 283–435 (NYKINQEEDT…LLLYEKMNYT (153 aa)). C379 (phosphocysteine intermediate) is an active-site residue. Positions 476 and 530 each coordinate Zn(2+).

It belongs to the protein-tyrosine phosphatase family. Non-receptor class dual specificity subfamily. Interacts with PES. It depends on Zn(2+) as a cofactor.

The protein resides in the cytoplasm. It localises to the nucleus. The enzyme catalyses O-phospho-L-tyrosyl-[protein] + H2O = L-tyrosyl-[protein] + phosphate. The catalysed reaction is O-phospho-L-seryl-[protein] + H2O = L-seryl-[protein] + phosphate. Its function is as follows. Dual specificity protein phosphatase which dephosphorylates both phosphotyrosine and phosphoserine residues. The protein is Dual specificity protein phosphatase YVH1 of Plasmodium falciparum (isolate 3D7).